The primary structure comprises 75 residues: ATP synthase subunit c (75 aa).

A run of 2 helical transmembrane segments spans residues 12-32 (LASIGYGLAAIGSAIGVGIVV) and 49-69 (LTVLMYVGVAFTEALALIGIG).

This sequence belongs to the ATPase C chain family. As to quaternary structure, F-type ATPases have 2 components, F(1) - the catalytic core - and F(0) - the membrane proton channel. F(1) has five subunits: alpha(3), beta(3), gamma(1), delta(1), epsilon(1). F(0) has three main subunits: a(1), b(2) and c(10-14). The alpha and beta chains form an alternating ring which encloses part of the gamma chain. F(1) is attached to F(0) by a central stalk formed by the gamma and epsilon chains, while a peripheral stalk is formed by the delta and b chains.

The protein localises to the cell membrane. Its function is as follows. F(1)F(0) ATP synthase produces ATP from ADP in the presence of a proton or sodium gradient. F-type ATPases consist of two structural domains, F(1) containing the extramembraneous catalytic core and F(0) containing the membrane proton channel, linked together by a central stalk and a peripheral stalk. During catalysis, ATP synthesis in the catalytic domain of F(1) is coupled via a rotary mechanism of the central stalk subunits to proton translocation. In terms of biological role, key component of the F(0) channel; it plays a direct role in translocation across the membrane. A homomeric c-ring of between 10-14 subunits forms the central stalk rotor element with the F(1) delta and epsilon subunits. This is ATP synthase subunit c from Tropheryma whipplei (strain TW08/27) (Whipple's bacillus).